The chain runs to 201 residues: Superoxide dismutase [Mn] (201 aa).

Residues His-27, His-81, Asp-163, and His-167 each coordinate Mn(2+).

It belongs to the iron/manganese superoxide dismutase family. As to quaternary structure, homodimer. Mn(2+) is required as a cofactor.

It is found in the secreted. It catalyses the reaction 2 superoxide + 2 H(+) = H2O2 + O2. Destroys superoxide anion radicals which are normally produced within the cells and which are toxic to biological systems. The sequence is that of Superoxide dismutase [Mn] (sodA) from Streptococcus pyogenes serotype M3 (strain ATCC BAA-595 / MGAS315).